The primary structure comprises 299 residues: ATP synthase gamma chain (299 aa).

The protein belongs to the ATPase gamma chain family. F-type ATPases have 2 components, CF(1) - the catalytic core - and CF(0) - the membrane proton channel. CF(1) has five subunits: alpha(3), beta(3), gamma(1), delta(1), epsilon(1). CF(0) has three main subunits: a, b and c.

It localises to the cell membrane. Produces ATP from ADP in the presence of a proton gradient across the membrane. The gamma chain is believed to be important in regulating ATPase activity and the flow of protons through the CF(0) complex. This chain is ATP synthase gamma chain, found in Clavibacter michiganensis subsp. michiganensis (strain NCPPB 382).